A 123-amino-acid polypeptide reads, in one-letter code: Ig heavy chain V region HPCM6 (123 aa).

An Ig-like domain is found at 1 to 114 (EVKLVESGGG…YPHWYFDVWG (114 aa)).

The chain is Ig heavy chain V region HPCM6 from Mus musculus (Mouse).